Consider the following 241-residue polypeptide: Methylthioribulose-1-phosphate dehydratase (241 aa).

A substrate-binding site is contributed by Cys96. 2 residues coordinate Zn(2+): His114 and His116. Residue Glu138 is the Proton donor/acceptor of the active site. His194 is a binding site for Zn(2+).

Belongs to the aldolase class II family. MtnB subfamily. Homotetramer. Interacts with APAF1. May interact with CASP1. It depends on Zn(2+) as a cofactor. Expressed in skeletal muscle (at protein level).

Its subcellular location is the cytoplasm. It carries out the reaction 5-(methylsulfanyl)-D-ribulose 1-phosphate = 5-methylsulfanyl-2,3-dioxopentyl phosphate + H2O. It functions in the pathway amino-acid biosynthesis; L-methionine biosynthesis via salvage pathway; L-methionine from S-methyl-5-thio-alpha-D-ribose 1-phosphate: step 2/6. Functionally, catalyzes the dehydration of methylthioribulose-1-phosphate (MTRu-1-P) into 2,3-diketo-5-methylthiopentyl-1-phosphate (DK-MTP-1-P). Functions in the methionine salvage pathway, which plays a key role in cancer, apoptosis, microbial proliferation and inflammation. May inhibit the CASP1-related inflammatory response (pyroptosis), the CASP9-dependent apoptotic pathway and the cytochrome c-dependent and APAF1-mediated cell death. This is Methylthioribulose-1-phosphate dehydratase from Mus musculus (Mouse).